The following is a 571-amino-acid chain: Proline--tRNA ligase (571 aa).

Belongs to the class-II aminoacyl-tRNA synthetase family. ProS type 1 subfamily. As to quaternary structure, homodimer.

The protein localises to the cytoplasm. The enzyme catalyses tRNA(Pro) + L-proline + ATP = L-prolyl-tRNA(Pro) + AMP + diphosphate. Catalyzes the attachment of proline to tRNA(Pro) in a two-step reaction: proline is first activated by ATP to form Pro-AMP and then transferred to the acceptor end of tRNA(Pro). As ProRS can inadvertently accommodate and process non-cognate amino acids such as alanine and cysteine, to avoid such errors it has two additional distinct editing activities against alanine. One activity is designated as 'pretransfer' editing and involves the tRNA(Pro)-independent hydrolysis of activated Ala-AMP. The other activity is designated 'posttransfer' editing and involves deacylation of mischarged Ala-tRNA(Pro). The misacylated Cys-tRNA(Pro) is not edited by ProRS. This Shewanella baltica (strain OS155 / ATCC BAA-1091) protein is Proline--tRNA ligase.